The following is a 301-amino-acid chain: Prestalk A differentiation protein A (301 aa).

The protein belongs to the NmrA-type oxidoreductase family.

Involved in development and cell differentiation. This is Prestalk A differentiation protein A (padA) from Dictyostelium discoideum (Social amoeba).